The sequence spans 283 residues: MNDSQRVSILSEALPYIQSFSGRKIVIKYGGSVMENDNLKKAFFRDIALLSSVGVCPIVIHGGGPEINNWLKKLEISPKFENGLRITDQKTMDIVEMVLMGRVNKQIVKGVNKTGSLAVGISGLDGNLIQSRELGDGSHGLVGEVTKINPEILDPLISKGYIPIISSIGSTMEGISHNINADFVAGEIAAAINAEKLILLTDTQGILKEKDNKNSLVEKMNLKEARNFIDKKIVTEGMIPKTECCIRALAQGVKAAHIIDGRIEHSLLLEIFTNSGIGTMIVA.

Residues 63 to 64, R85, and N178 each bind substrate; that span reads GG.

This sequence belongs to the acetylglutamate kinase family. ArgB subfamily.

Its subcellular location is the cytoplasm. It carries out the reaction N-acetyl-L-glutamate + ATP = N-acetyl-L-glutamyl 5-phosphate + ADP. It participates in amino-acid biosynthesis; L-arginine biosynthesis; N(2)-acetyl-L-ornithine from L-glutamate: step 2/4. Its function is as follows. Catalyzes the ATP-dependent phosphorylation of N-acetyl-L-glutamate. The protein is Acetylglutamate kinase of Prochlorococcus marinus (strain MIT 9312).